The primary structure comprises 235 residues: Claudin-16 (235 aa).

Residues 1–3 lie on the Cytoplasmic side of the membrane; sequence MKD. Residues 4–24 form a helical membrane-spanning segment; sequence LLQYAACFLAIFSTGFLIVAT. Over 25–79 the chain is Extracellular; that stretch reads RTDCWMVNADDSLEVSTKCRGLWWECVTNAFDGIRTCDEYDSIYAEHPLKLVVTR. A helical membrane pass occupies residues 80–100; it reads ALMITADILAGFGFITLLLGL. At 101–115 the chain is on the cytoplasmic side; sequence DCVKFLPDEPHIKVR. Residues 116-136 form a helical membrane-spanning segment; that stretch reads LCFVAGTVLLIAGTPGIIGSV. The Extracellular portion of the chain corresponds to 137 to 169; sequence WYAVDVYVERSSLVLHNIFLGIQYKFGWSCWLG. A helical membrane pass occupies residues 170-190; the sequence is MAGSLGCFLAGALLTCCLYLF. The Cytoplasmic segment spans residues 191–235; it reads KDVGPERNYPYAMRKPYSTAGVSMAKSYKAPRTETAKMYAVDTRV. Residues 233 to 235 carry the Interaction with TJP1 motif; it reads TRV.

The protein belongs to the claudin family. Can form heteropolymeric tight junction strands with other claudins. Interacts with CLDN19. Interacts (via PDZ-binding motif TRV) with TJP1 (via PDZ domain). Cannot form tight junction strands on its own.

It is found in the cell junction. The protein resides in the tight junction. The protein localises to the cell membrane. It catalyses the reaction Mg(2+)(in) = Mg(2+)(out). It carries out the reaction Ca(2+)(in) = Ca(2+)(out). The enzyme catalyses Na(+)(in) = Na(+)(out). The catalysed reaction is K(+)(in) = K(+)(out). It catalyses the reaction Rb(+)(in) = Rb(+)(out). It carries out the reaction Cs(+)(in) = Cs(+)(out). The enzyme catalyses Li(+)(in) = Li(+)(out). Forms paracellular channels: coassembles with CLDN19 into tight junction strands with cation-selective channels through the strands, conveying epithelial permeability in a process known as paracellular tight junction permeability. Involved in the maintenance of ion gradients along the nephron. In the thick ascending limb (TAL) of Henle's loop, facilitates sodium paracellular permeability from the interstitial compartment to the lumen, contributing to the lumen-positive transepithelial potential that drives paracellular magnesium and calcium reabsorption. The sequence is that of Claudin-16 from Rattus norvegicus (Rat).